Here is a 516-residue protein sequence, read N- to C-terminus: Poly(U)-binding-splicing factor PUF60-B (516 aa).

RRM domains are found at residues Cys86 to Ser164 and Asn183 to Thr261. A disordered region spans residues Thr356 to Glu398. The span at Thr372 to Ser388 shows a compositional bias: basic and acidic residues. The RRM 3; atypical domain maps to Thr419 to Gln506.

The protein belongs to the RRM half pint family.

It is found in the nucleus. Its function is as follows. DNA- and RNA-binding protein, involved in transcription repression and pre-mRNA splicing. The polypeptide is Poly(U)-binding-splicing factor PUF60-B (puf60b) (Danio rerio (Zebrafish)).